The primary structure comprises 545 residues: Glutamine-dependent NAD(+) synthetase (545 aa).

The 243-residue stretch at 5–247 (LRIAMAQFDF…DQWLVVDYMR (243 aa)) folds into the CN hydrolase domain. Glu-46 (proton acceptor; for glutaminase activity) is an active-site residue. Lys-113 functions as the For glutaminase activity in the catalytic mechanism. Residue Tyr-119 participates in L-glutamine binding. The active-site Nucleophile; for glutaminase activity is Cys-151. Positions 177 and 183 each coordinate L-glutamine. Positions 269 to 545 (VWRAVVRGVQ…RYPISNAYRG (277 aa)) are ligase. Position 292–299 (292–299 (GLSGGIDS)) interacts with ATP. Asn-375 is a binding site for deamido-NAD(+). Thr-399 serves as a coordination point for ATP. Glu-404 and Lys-516 together coordinate deamido-NAD(+).

In the C-terminal section; belongs to the NAD synthetase family.

It carries out the reaction deamido-NAD(+) + L-glutamine + ATP + H2O = L-glutamate + AMP + diphosphate + NAD(+) + H(+). Its pathway is cofactor biosynthesis; NAD(+) biosynthesis; NAD(+) from deamido-NAD(+) (L-Gln route): step 1/1. Its function is as follows. Catalyzes the ATP-dependent amidation of deamido-NAD to form NAD. Uses L-glutamine as a nitrogen source. This is Glutamine-dependent NAD(+) synthetase from Xylella fastidiosa (strain Temecula1 / ATCC 700964).